Consider the following 101-residue polypeptide: Small ribosomal subunit protein uS10 (101 aa).

Belongs to the universal ribosomal protein uS10 family. In terms of assembly, part of the 30S ribosomal subunit.

Its function is as follows. Involved in the binding of tRNA to the ribosomes. The sequence is that of Small ribosomal subunit protein uS10 from Mycobacterium avium (strain 104).